The chain runs to 487 residues: Aspartyl/glutamyl-tRNA(Asn/Gln) amidotransferase subunit B (487 aa).

Belongs to the GatB/GatE family. GatB subfamily. As to quaternary structure, heterotrimer of A, B and C subunits.

It carries out the reaction L-glutamyl-tRNA(Gln) + L-glutamine + ATP + H2O = L-glutaminyl-tRNA(Gln) + L-glutamate + ADP + phosphate + H(+). The enzyme catalyses L-aspartyl-tRNA(Asn) + L-glutamine + ATP + H2O = L-asparaginyl-tRNA(Asn) + L-glutamate + ADP + phosphate + 2 H(+). Allows the formation of correctly charged Asn-tRNA(Asn) or Gln-tRNA(Gln) through the transamidation of misacylated Asp-tRNA(Asn) or Glu-tRNA(Gln) in organisms which lack either or both of asparaginyl-tRNA or glutaminyl-tRNA synthetases. The reaction takes place in the presence of glutamine and ATP through an activated phospho-Asp-tRNA(Asn) or phospho-Glu-tRNA(Gln). This chain is Aspartyl/glutamyl-tRNA(Asn/Gln) amidotransferase subunit B, found in Roseiflexus sp. (strain RS-1).